Consider the following 510-residue polypeptide: Membrane-bound transcription factor site-2 protease (510 aa).

Over 1-3 (MIP) the chain is Cytoplasmic. Residues 4 to 24 (VSLVVVVVGGWTAVYLADLVL) traverse the membrane as a helical segment. The Lumenal portion of the chain corresponds to 25–74 (KSSVYFKHSYEDWLEKNGLSISPFHIRWQTSVFNRAFYSWGRRKARMLYQ). A run of 2 helical transmembrane segments spans residues 75-95 (WFNFGMVFGVIAMFSSFFLLG) and 96-107 (KTLMQTLAQMMA). Residues 108-135 (DSPSSSSSSSSSSSSSSSSSIHNEQVLQ) are Lumenal-facing. The helical transmembrane segment at 136 to 160 (VVVPGINLPVNQLTYFFAAVLISGV) threads the bilayer. Histidine 162 serves as a coordination point for Zn(2+). Glutamate 163 is a catalytic residue. 3 helical membrane passes run 165 to 177 (GHGIAAIREQVRF), 178 to 200 (NGFGIFLFIIYPGAFVDLFTTHL), and 220 to 242 (FVLALLGILALVLLPVILLPFYY). Residue histidine 166 participates in Zn(2+) binding. Residues 243 to 437 (TGVGVLITEV…LPVIVETFVK (195 aa)) are Lumenal-facing. Residue asparagine 328 is glycosylated (N-linked (GlcNAc...) asparagine). A run of 2 helical transmembrane segments spans residues 438–455 (YLISLSGALAIVNAVPCF) and 456–467 (ALDGQWILNSFL). The Lumenal portion of the chain corresponds to 468–483 (DATLTSVIGDNDVKDL). The chain crosses the membrane as a helical span at residues 484-504 (IGFFILLGGSVLLAANVTLGL). The Cytoplasmic segment spans residues 505–510 (WMVTAR).

It belongs to the peptidase M50A family. The cofactor is Zn(2+).

Its subcellular location is the membrane. The protein resides in the cytoplasm. It is found in the golgi apparatus membrane. The enzyme catalyses Cleaves several transcription factors that are type-2 transmembrane proteins within membrane-spanning domains. Known substrates include sterol regulatory element-binding protein (SREBP) -1, SREBP-2 and forms of the transcriptional activator ATF6. SREBP-2 is cleaved at the site 477-DRSRILL-|-CVLTFLCLSFNPLTSLLQWGGA-505. The residues Asn-Pro, 11 residues distal to the site of cleavage in the membrane-spanning domain, are important for cleavage by S2P endopeptidase. Replacement of either of these residues does not prevent cleavage, but there is no cleavage if both of these residues are replaced.. In terms of biological role, zinc metalloprotease that mediates intramembrane proteolysis of proteins such as ATF6, ATF6B, SREBF1/SREBP1 and SREBF2/SREBP2. Catalyzes the second step in the proteolytic activation of the sterol regulatory element-binding proteins (SREBPs) SREBF1/SREBP1 and SREBF2/SREBP2: cleaves SREBPs within the first transmembrane segment, thereby releasing the N-terminal segment with a portion of the transmembrane segment attached. Mature N-terminal SREBP fragments shuttle to the nucleus and activate gene transcription. Also mediates the second step in the proteolytic activation of the cyclic AMP-dependent transcription factor ATF-6 (ATF6 and ATF6B). Involved in intramembrane proteolysis during bone formation. In astrocytes and osteoblasts, upon DNA damage and ER stress, mediates the second step of the regulated intramembrane proteolytic activation of the transcription factor CREB3L1, leading to the inhibition of cell-cycle progression. The polypeptide is Membrane-bound transcription factor site-2 protease (MBTPS2) (Cricetulus griseus (Chinese hamster)).